We begin with the raw amino-acid sequence, 358 residues long: scyllo-inositol 2-dehydrogenase (NADP(+)) IolW (358 aa).

It belongs to the Gfo/Idh/MocA family.

It carries out the reaction scyllo-inositol + NADP(+) = scyllo-inosose + NADPH + H(+). Functionally, catalyzes the reversible NADPH-dependent reduction of scyllo-inosose (SIS) to scyllo-inositol (SI). Cannot use NADH instead of NADPH. May be involved in reduction of not only SIS but also various oxidized compounds manifested upon stressful conditions. The protein is scyllo-inositol 2-dehydrogenase (NADP(+)) IolW of Bacillus subtilis (strain 168).